The primary structure comprises 628 residues: Rac GTPase-activating protein 1 (628 aa).

Met1 bears the N-acetylmethionine mark. A coiled-coil region spans residues 33-110 (QVVKDFEDFR…IQLIRDILMC (78 aa)). An interaction with SLC26A8 region spans residues 107-286 (ILMCDTSGSI…GTPQNTGGMR (180 aa)). Ser150 carries the phosphoserine; by PLK1 modification. Ser155 bears the Phosphoserine mark. Position 158 is a phosphoserine; by PLK1 (Ser158). Thr162 bears the Phosphothreonine mark. Residues Ser165 and Ser171 each carry the phosphoserine; by PLK1 modification. A disordered region spans residues 179-201 (KKREKRRSNSRQFIDGPPGPVKK). A phosphoserine mark is found at Ser204, Ser207, and Ser215. Residues 242–284 (SWTRSRGKSGPLQPVNSDSALNSRPLEPRTDTDNLGTPQNTGG) are disordered. Lys249 participates in a covalent cross-link: Glycyl lysine isopeptide (Lys-Gly) (interchain with G-Cter in SUMO2). Position 258 is a phosphoserine (Ser258). Residues 274–283 (DNLGTPQNTG) show a composition bias toward polar residues. Residues 287–336 (LHDFVSKTVIKPESCVPCGKRIKFGKLSLKCRDCRLVSHPECRDRCPLPC) form a Phorbol-ester/DAG-type zinc finger. Thr343 bears the Phosphothreonine mark. The Rho-GAP domain maps to 350–540 (GMLADFVSQA…RLLSLPLEYW (191 aa)). Ser388 carries the phosphoserine; by AURKB modification. Lys405 participates in a covalent cross-link: Glycyl lysine isopeptide (Lys-Gly) (interchain with G-Cter in SUMO2). The residue at position 411 (Ser411) is a Phosphoserine; by AURKB. Phosphothreonine is present on residues Thr564, Thr577, Thr585, and Thr602.

Heterotetramer of two molecules each of RACGAP1 and KIF23. Found in the centralspindlin complex. Associates with alpha-, beta- and gamma-tubulin and microtubules. Interacts via its Rho-GAP domain with RND2. Associates with AURKB during M phase. Interacts via its Rho-GAP domain and basic region with PRC1. The interaction with PRC1 inhibits its GAP activity towards CDC42 in vitro, which may be required for maintaining normal spindle morphology. Interacts with SLC26A8 via its N-terminus. Interacts with ECT2; the interaction is direct, occurs at anaphase and during cytokinesis in a microtubule-dependent manner, is enhanced by phosphorylation by PLK1 and phosphorylation at Ser-165 plays a major role in mediating binding. Interacts with RAB11FIP3; the interaction occurs at late telophase. Interacts with KIF23; the interaction is direct. Phosphorylated at multiple sites in the midbody during cytokinesis. Phosphorylation by AURKB on Ser-388 at the midbody is, at least in part, responsible for exerting its latent GAP activity towards RhoA. Phosphorylation on multiple serine residues by PLK1 enhances its association with ECT2 and is critical for cleavage furrow formation. Phosphorylation on Ser-165 plays a major role in mediating interaction with ECT2. Phosphorylation on Ser-158 does not appear to contribute to binding to ECT2. Highly expressed in testis, thymus and spleen and weakly expressed in brain, heart, skeletal muscle and kidney. In testis, expression is restricted to germ cells with the highest levels of expression found in spermatocytes. Not detected in adult liver. Also expressed in fetal liver and in several hematopoietic cell lines.

Its subcellular location is the nucleus. The protein resides in the cytoplasm. It localises to the cytoskeleton. The protein localises to the spindle. It is found in the cytoplasmic vesicle. Its subcellular location is the secretory vesicle. The protein resides in the acrosome. It localises to the cleavage furrow. The protein localises to the midbody. It is found in the midbody ring. Its subcellular location is the cell membrane. Component of the centralspindlin complex that serves as a microtubule-dependent and Rho-mediated signaling required for the myosin contractile ring formation during the cell cycle cytokinesis. Required for proper attachment of the midbody to the cell membrane during cytokinesis. Sequentially binds to ECT2 and RAB11FIP3 which regulates cleavage furrow ingression and abscission during cytokinesis. Plays key roles in controlling cell growth and differentiation of hematopoietic cells through mechanisms other than regulating Rac GTPase activity. Has a critical role in erythropoiesis. Also involved in the regulation of growth-related processes in adipocytes and myoblasts. May be involved in regulating spermatogenesis and in the RACGAP1 pathway in neuronal proliferation. Shows strong GAP (GTPase activation) activity towards CDC42 and RAC1 and less towards RHOA. Essential for the early stages of embryogenesis. May play a role in regulating cortical activity through RHOA during cytokinesis. May participate in the regulation of sulfate transport in male germ cells. This chain is Rac GTPase-activating protein 1, found in Mus musculus (Mouse).